We begin with the raw amino-acid sequence, 357 residues long: Probable GTP 3',8-cyclase (357 aa).

The Radical SAM core domain maps to 5-234 (DFGRDVSGVR…DRRRYWVSSR (230 aa)). Position 14 (Arg14) interacts with GTP. Residues Cys21 and Cys25 each coordinate [4Fe-4S] cluster. Residue Tyr27 coordinates S-adenosyl-L-methionine. Cys28 contacts [4Fe-4S] cluster. Lys68 lines the GTP pocket. Gly72 contributes to the S-adenosyl-L-methionine binding site. Thr96 contacts GTP. Residue Ser120 participates in S-adenosyl-L-methionine binding. Lys157 lines the GTP pocket. The disordered stretch occupies residues 232 to 256 (SSRDAGSTADDAAQSVTPDGGAHPD). [4Fe-4S] cluster contacts are provided by Cys272 and Cys275. 277-279 (RVR) is a GTP binding site. Cys289 contacts [4Fe-4S] cluster.

Belongs to the radical SAM superfamily. MoaA family. The cofactor is [4Fe-4S] cluster.

The enzyme catalyses GTP + AH2 + S-adenosyl-L-methionine = (8S)-3',8-cyclo-7,8-dihydroguanosine 5'-triphosphate + 5'-deoxyadenosine + L-methionine + A + H(+). It participates in cofactor biosynthesis; molybdopterin biosynthesis. Functionally, catalyzes the cyclization of GTP to (8S)-3',8-cyclo-7,8-dihydroguanosine 5'-triphosphate. The sequence is that of Probable GTP 3',8-cyclase from Halobacterium salinarum (strain ATCC 29341 / DSM 671 / R1).